We begin with the raw amino-acid sequence, 627 residues long: Chaperone protein DnaK (627 aa).

At threonine 197 the chain carries Phosphothreonine; by autocatalysis. Positions 596–615 (MYAQGGDQGQQAAPQQEQSG) are enriched in low complexity. The disordered stretch occupies residues 596–627 (MYAQGGDQGQQAAPQQEQSGDNVEDVEFEEVK). The span at 617 to 627 (NVEDVEFEEVK) shows a compositional bias: acidic residues.

Belongs to the heat shock protein 70 family.

In terms of biological role, acts as a chaperone. In Flavobacterium johnsoniae (strain ATCC 17061 / DSM 2064 / JCM 8514 / BCRC 14874 / CCUG 350202 / NBRC 14942 / NCIMB 11054 / UW101) (Cytophaga johnsonae), this protein is Chaperone protein DnaK.